The chain runs to 422 residues: Lactoyl-CoA dehydratase subunit alpha (422 aa).

It belongs to the FldB/FldC dehydratase alpha/beta subunit family. In terms of assembly, heterodimer of an alpha (LcdA) and a beta (LcdB) subunit. The cofactor is [4Fe-4S] cluster. FMN is required as a cofactor. It depends on riboflavin as a cofactor. Requires Mg(2+) as cofactor.

It catalyses the reaction (R)-lactoyl-CoA = acryloyl-CoA + H2O. It carries out the reaction (2R)-hydroxybutanoyl-CoA = (2E)-butenoyl-CoA + H2O. Its activity is regulated as follows. Activated by the LcdC protein. Its function is as follows. Involved in the acrylate pathway for the conversion of D-lactic acid to propionic acid. Catalyzes the reversible dehydration of Lactoyl-CoA and 2-hydroxybutyroyl-CoA to acryloyl-CoA and crotonyl-CoA, respectively. The sequence is that of Lactoyl-CoA dehydratase subunit alpha (lcdA) from Anaerotignum propionicum (Clostridium propionicum).